The primary structure comprises 145 residues: UPF0201 protein LS215_1276 (145 aa).

Belongs to the UPF0201 family.

In Saccharolobus islandicus (strain L.S.2.15 / Lassen #1) (Sulfolobus islandicus), this protein is UPF0201 protein LS215_1276.